We begin with the raw amino-acid sequence, 503 residues long: ATP synthase subunit alpha (503 aa).

170-177 is a binding site for ATP; that stretch reads GDRKTGKT.

This sequence belongs to the ATPase alpha/beta chains family. F-type ATPases have 2 components, CF(1) - the catalytic core - and CF(0) - the membrane proton channel. CF(1) has five subunits: alpha(3), beta(3), gamma(1), delta(1), epsilon(1). CF(0) has four main subunits: a, b, b' and c.

It is found in the cellular thylakoid membrane. It carries out the reaction ATP + H2O + 4 H(+)(in) = ADP + phosphate + 5 H(+)(out). Its function is as follows. Produces ATP from ADP in the presence of a proton gradient across the membrane. The alpha chain is a regulatory subunit. This chain is ATP synthase subunit alpha, found in Gloeothece citriformis (strain PCC 7424) (Cyanothece sp. (strain PCC 7424)).